The chain runs to 358 residues: Protein RecA 2 (358 aa).

69–76 is a binding site for ATP; it reads GPESSGKT. The segment at 331–358 is disordered; that stretch reads GIGKSGAPSPRRRTSPRRPKVAARSAAV. Residues 340 to 351 show a composition bias toward basic residues; that stretch reads PRRRTSPRRPKV.

This sequence belongs to the RecA family.

The protein localises to the cytoplasm. Its function is as follows. Can catalyze the hydrolysis of ATP in the presence of single-stranded DNA, the ATP-dependent uptake of single-stranded DNA by duplex DNA, and the ATP-dependent hybridization of homologous single-stranded DNAs. It interacts with LexA causing its activation and leading to its autocatalytic cleavage. This is Protein RecA 2 from Myxococcus xanthus.